Reading from the N-terminus, the 79-residue chain is Biotin synthase auxiliary protein (79 aa).

The protein belongs to the BsaP family. Iron-sulfur cluster is required as a cofactor.

Required for the activity of the biotin synthase BioB. This Mycobacterium bovis (strain ATCC BAA-935 / AF2122/97) protein is Biotin synthase auxiliary protein.